The following is a 219-amino-acid chain: Cytidylate kinase (219 aa).

10 to 18 provides a ligand contact to ATP; that stretch reads GPAAAGKST.

The protein belongs to the cytidylate kinase family. Type 1 subfamily.

It localises to the cytoplasm. It carries out the reaction CMP + ATP = CDP + ADP. The enzyme catalyses dCMP + ATP = dCDP + ADP. The polypeptide is Cytidylate kinase (Staphylococcus aureus (strain bovine RF122 / ET3-1)).